A 346-amino-acid polypeptide reads, in one-letter code: UPF0718 protein YraQ (346 aa).

The next 9 membrane-spanning stretches (helical) occupy residues 12-32, 71-91, 113-133, 146-166, 167-187, 223-243, 260-280, 296-316, and 326-346; these read PIQW…LWYV, MIYF…GSLI, LLGT…APVA, ALAF…FMGF, VLGW…VLLI, ALWT…LVLG, SLMW…PTAA, APAL…LIML, and WLTG…ALLF.

It belongs to the UPF0718 family.

It localises to the cell membrane. This is UPF0718 protein YraQ (yraQ) from Escherichia coli (strain K12).